Here is a 376-residue protein sequence, read N- to C-terminus: Alcohol dehydrogenase 1 (376 aa).

An N-acetylserine modification is found at Ser-2. Zn(2+) contacts are provided by Cys-47, His-68, Cys-98, Cys-101, Cys-104, Cys-112, and Cys-176. Residues 201–206, Asp-225, and Lys-230 each bind NAD(+); that span reads GLGGVG. Lys-235 is subject to N6-succinyllysine. Position 294 to 296 (294 to 296) interacts with NAD(+); that stretch reads VGV. Lys-341 is subject to N6-succinyllysine. An NAD(+)-binding site is contributed by Arg-371.

It belongs to the zinc-containing alcohol dehydrogenase family. Class-I subfamily. Dimer of identical or non-identical chains of three types (A, B, C), which are coded by 3 separate genes at different loci. Requires Zn(2+) as cofactor.

Its subcellular location is the cytoplasm. It catalyses the reaction a primary alcohol + NAD(+) = an aldehyde + NADH + H(+). It carries out the reaction a secondary alcohol + NAD(+) = a ketone + NADH + H(+). This Rattus norvegicus (Rat) protein is Alcohol dehydrogenase 1 (Adh1).